The following is a 170-amino-acid chain: Acetyl-CoA decarbonylase/synthase complex subunit epsilon 2 (170 aa).

The protein belongs to the CdhB family. In terms of assembly, heterotetramer of two alpha and two epsilon subunits. The ACDS complex is made up of alpha, epsilon, beta, gamma and delta subunits with a probable stoichiometry of (alpha(2)epsilon(2))(4)-beta(8)-(gamma(1)delta(1))(8).

It participates in one-carbon metabolism; methanogenesis from acetate. Part of a complex that catalyzes the reversible cleavage of acetyl-CoA, allowing growth on acetate as sole source of carbon and energy. The alpha-epsilon subcomponent functions as a carbon monoxide dehydrogenase. The precise role of the epsilon subunit is unclear; it may have a stabilizing role within the alpha(2)epsilon(2) component and/or be involved in electron transfer to FAD during a potential FAD-mediated CO oxidation. This is Acetyl-CoA decarbonylase/synthase complex subunit epsilon 2 (cdhB2) from Methanosarcina acetivorans (strain ATCC 35395 / DSM 2834 / JCM 12185 / C2A).